Reading from the N-terminus, the 483-residue chain is Altronate oxidoreductase (483 aa).

Residue 18 to 29 coordinates NAD(+); sequence IIQFGEGNFLRA.

Belongs to the mannitol dehydrogenase family. UxaB subfamily.

The catalysed reaction is D-altronate + NAD(+) = keto-D-tagaturonate + NADH + H(+). It participates in carbohydrate metabolism; pentose and glucuronate interconversion. This chain is Altronate oxidoreductase, found in Klebsiella pneumoniae (strain 342).